A 680-amino-acid polypeptide reads, in one-letter code: Forkhead box protein P4 (680 aa).

Residues Met-1 to Gln-17 show a composition bias toward polar residues. The disordered stretch occupies residues Met-1–Met-56. A phosphoserine mark is found at Ser-52 and Ser-86. Glycyl lysine isopeptide (Lys-Gly) (interchain with G-Cter in SUMO2) cross-links involve residues Lys-175 and Lys-246. The segment at Phe-262–His-306 is disordered. Polar residues predominate over residues Thr-276–Thr-286. Positions Ser-287–Pro-298 are enriched in basic and acidic residues. The C2H2-type zinc-finger motif lies at Gly-307 to His-332. The tract at residues Val-349–Leu-370 is leucine-zipper. Lys-378 participates in a covalent cross-link: Glycyl lysine isopeptide (Lys-Gly) (interchain with G-Cter in SUMO2). Residues Gly-407–Lys-445 are disordered. Positions Arg-467 to Lys-559 form a DNA-binding region, fork-head. Residue Ser-554 is modified to Phosphoserine. The interval Pro-602 to Ser-680 is disordered. Residues Ser-617–Val-635 are compositionally biased toward polar residues. Positions Arg-668–Ser-680 are enriched in acidic residues.

As to quaternary structure, forms homodimers and heterodimers with FOXP1 and FOXP2. Dimerization is required for DNA-binding.

It is found in the nucleus. Transcriptional repressor that represses lung-specific expression. In Homo sapiens (Human), this protein is Forkhead box protein P4 (FOXP4).